The following is a 1114-amino-acid chain: Putative surface protein SAV2496/SAV2497 (1114 aa).

The N-terminal stretch at 1 to 50 (MRDKKGPVNKRVDFLSNKLNKYSIRKFTVGTASILIGSLMYLGTQQEAEA) is a signal peptide. Disordered regions lie at residues 76–116 (TNKD…EDTP), 440–473 (KFNP…NPLT), and 496–1088 (EYGP…TGLE). Composition is skewed to basic and acidic residues over residues 96–116 (DTIE…EDTP), 451–461 (KVTREGQKGEK), 505–523 (GHRD…EEVP), 554–570 (SIVE…RKFN), and 579–589 (KVTREGQKGEK). The 83-residue stretch at 419–501 (SAKNNNRIRK…NELTEYGPET (83 aa)) folds into the G5 1 domain. The G5 2 domain maps to 547–628 (YGPVKGDSIV…NELTEYGPET (82 aa)). Positions 590–604 (TTTPTLKNPLTGEII) are enriched in low complexity. 11 stretches are compositionally biased toward basic and acidic residues: residues 605–618 (SKGE…KDPI), 632–650 (GHRD…EEVP), 681–697 (SIVE…RKFN), 706–716 (KVTREGQKGEK), 733–746 (SKGE…KDPI), 760–778 (GHRD…EEVP), 809–825 (SIVE…RKFN), 834–844 (KVTREGQKGEK), 861–874 (SKGE…KDPV), 918–929 (KVIEEPVDDVIK), and 946–965 (FETK…RVKQ). Residues 674-756 (YGPVKGDSIV…NELTEYGPET (83 aa)) enclose the G5 3 domain. The G5 4 domain occupies 802–884 (YGPVKGDSIV…NELTEFGGEK (83 aa)). Residues 930–1012 (HGPKTGTPET…DKIVEFGGEK (83 aa)) form the G5 5 domain. Residues 968–982 (QPGSKTITTPITVNP) show a composition bias toward polar residues. Over residues 996–1026 (EITKQPVDKIVEFGGEKPKDPKGPENPEKPS) the composition is skewed to basic and acidic residues. Positions 1082-1086 (LPKTG) match the LPXTG sorting signal motif. Thr1085 carries the pentaglycyl murein peptidoglycan amidated threonine modification. Positions 1086 to 1114 (GLESTQKGLIFSSIIGIAGLMLLARRRKN) are cleaved as a propeptide — removed by sortase.

It is found in the secreted. It localises to the cell wall. This Staphylococcus aureus (strain Mu50 / ATCC 700699) protein is Putative surface protein SAV2496/SAV2497.